Consider the following 669-residue polypeptide: MARGATWTRRLHLHGLFLAVLLLLTLPAGSTAAAGGGGGTVIGIDLGTTYSCVGVYRNGHVEIIANDQGNRITPSWVAFTGGGERLIGEAAKNQAAANPGRTVYDAKRLIGRRFADAEVQRDMRLLPFAVVDKGGKPHVRVEVRGGDVRLLSPEEVSAMVLARMKETAEAYLGEEVTRAVVTVPAYFNDAQRQATKDAATIAGLAVERILNEPTAAALAYGVGKEGAGGKNVLVFDLGGGTFDVSVLAIDGGVYEVLATNGDTHLGGEDFDQRVMEHFVELVRRKHGRDIAGDARALGKLRRECERAKRALSIQHQVRVEVESLFDGVDLSEPLSRARFEELNNDLFRKTMAPVRKAMADARLSNADIDEIVLVGGSTRIPKVRQLLRDYFGGKQPNQGVNPDEAVAYGAAIQANIVGGDTDNKTRDMVVLDVTPLTLGLETAGGVMATLIPRNTPVPTKRAQLFSTYKDKQTTVTVKVFEGERSMTRDNRLLGRFDLAGIAPAPRGAPQIEVAFEVDADGILSVSAADRATGRSERITISGDDRKTSREEIDRMLGEAEEFADEDRRHRERAGARNSLEAYVYGVKNAVVGGEMAGAMDGGEKEKVEAAVMEAYEWLDGNQDVGKEEYEEKLRELEDVCNPVMSAVYQRSGGSRRDGDGGGDDDHDEL.

The signal sequence occupies residues 1–32; sequence MARGATWTRRLHLHGLFLAVLLLLTLPAGSTA. N-linked (GlcNAc...) asparagine glycosylation occurs at Asn423. Residues 646-669 form a disordered region; the sequence is AVYQRSGGSRRDGDGGGDDDHDEL. Residues 660-669 are compositionally biased toward acidic residues; sequence GGGDDDHDEL. The Prevents secretion from ER signature appears at 666–669; it reads HDEL.

The protein belongs to the heat shock protein 70 family.

It is found in the endoplasmic reticulum. In terms of biological role, functions as a chaperone during endoplasmic reticulum (ER) stress response. This is Heat shock 70 kDa protein BIP3 from Oryza sativa subsp. japonica (Rice).